A 720-amino-acid polypeptide reads, in one-letter code: MRYDAFISYSHAADGALAPAVQRGLQRLARRWHRPRALEVFRDQTGLAVSHALWSSIKVALDQSEFFVLLASPEAAASPWVNQEIEHWLSRHSVDRLLPVVTSGEWVWDADAGDVDLERSTAVPPALRGVFGEEPRHLDLRWARAEHELDLRHGRFRDAIAELAAGMHGMSKEDLDGEDVIRHRQMLRMRRGALAVVCALLLLVAGTAVAWRNARGEVTATNVALQRQRAATAAEQHRTEEAADQARSQQQIVEAEQQRAQKAAEEARGQQAVAEAEQQRALRAAGEARRQEGIAAAEQRRAQKAAAEARRQRGVADAEKAKANRAAAEAERQRKIAADEQRKAHEAAAEAERQREEAVKQQRIAIGRRLLGQAGEARDRDPRTAIQLGIAARHIYPGPQSQAGLVETLVRTHYAGTVTGHTAVVSAVALSGDGRTLVTDGLDGTVMVWDPTDRAAPRRLAQLTSSTAPVYTVALSGDGRTLVTGSEDGTAMVWDLTDRAAPRRLAQLTGHTDVVDAVALSGDGRTLATGSFDGTAMVWDVTDRAAPRRLAQLTDHTAPVTAVALSGDGRTLATGSDDHTAMVWDLTDRAAPRRLAQLTGHTAGVDAVALSGDGRTLATGSYDGTAMLWDLTDRAAPRRLAQLTGHTAQVYTVALSRDGRTLATGSEDHTAMVWDLTDRAAPRRLAQLTGHTDAVDAVALSGDGRTLATAASITRRCCGM.

The region spanning 1–131 is the TIR domain; the sequence is MRYDAFISYS…AVPPALRGVF (131 aa). NAD(+)-binding positions include 10–11 and alanine 48; that span reads SH. Glutamate 84 is an active-site residue. A helical membrane pass occupies residues 192–211; sequence GALAVVCALLLLVAGTAVAW. Disordered regions lie at residues 231 to 275 and 292 to 359; these read ATAA…AVAE and EGIA…EEAV. Composition is skewed to basic and acidic residues over residues 256-268 and 307-359; these read EQQR…EEAR and AEAR…EEAV. A coiled-coil region spans residues 313 to 362; it reads RGVADAEKAKANRAAAEAERQRKIAADEQRKAHEAAAEAERQREEAVKQQ. WD repeat units follow at residues 420–459, 465–504, 510–549, 555–594, 600–639, 645–684, and 690–720; these read GHTA…APRR, SSTA…APRR, GHTD…APRR, DHTA…APRR, and GHTD…CCGM.

It is found in the cell membrane. It catalyses the reaction NAD(+) + H2O = ADP-D-ribose + nicotinamide + H(+). In terms of biological role, NAD(+) hydrolase (NADase) that catalyzes cleavage of NAD(+) into ADP-D-ribose (ADPR) and nicotinamide. This chain is NAD(+) hydrolase ApTIR, found in Actinoplanes sp. (strain ATCC 31044 / CBS 674.73 / SE50/110).